We begin with the raw amino-acid sequence, 320 residues long: D-amino-acid oxidase (320 aa).

Residues Gly18, Gly19, Val20, Ile21, Thr47, Thr48, Ser49, Gly53, Gly54, Leu55, Val161, and Thr176 each contribute to the FAD site. D-proline contacts are provided by Tyr220 and Arg275. Tyr220 and Arg275 together coordinate D-serine. Residues Arg275, Gly301, Gly302, Gly304, and Thr306 each coordinate FAD. Gly302 is a binding site for D-proline. Residue Gly302 coordinates D-serine.

Belongs to the DAMOX/DASOX family. FAD is required as a cofactor.

The protein resides in the cytoplasm. The protein localises to the secreted. It is found in the cell wall. It catalyses the reaction a D-alpha-amino acid + O2 + H2O = a 2-oxocarboxylate + H2O2 + NH4(+). It carries out the reaction D-leucine + O2 + H2O = 4-methyl-2-oxopentanoate + H2O2 + NH4(+). The catalysed reaction is D-valine + O2 + H2O = 3-methyl-2-oxobutanoate + H2O2 + NH4(+). The enzyme catalyses D-isoleucine + O2 + H2O = (R)-3-methyl-2-oxopentanoate + H2O2 + NH4(+). It catalyses the reaction D-methionine + O2 + H2O = 4-methylsulfanyl-2-oxobutanoate + H2O2 + NH4(+). Functionally, catalyzes the oxidative deamination of D-amino acids with broad substrate specificity. The protein is D-amino-acid oxidase of Streptomyces coelicolor (strain ATCC BAA-471 / A3(2) / M145).